The primary structure comprises 193 residues: Non-specific lipid transfer protein GPI-anchored 1 (193 aa).

The first 22 residues, 1–22, serve as a signal peptide directing secretion; sequence MKGLHLHLVLVTMTIVASIAAA. Cystine bridges form between C35/C76, C45/C60, C61/C106, and C74/C116. N-linked (GlcNAc...) asparagine glycosylation is found at N110 and N135. The segment at 138-161 is disordered; sequence TTPVAPAGKSPATPATSTDKGGSA. D165 carries the GPI-anchor amidated aspartate lipid modification. The propeptide at 166–193 is removed in mature form; the sequence is GHAVVALAVALMAVSFVLTLPRHVTLGM.

This sequence belongs to the plant LTP family. Post-translationally, O-glycosylated on hydroxyprolines; noncontiguous hydroxylproline residues are glycosylated with arabinogalactan. As to expression, up-regulated in the epidermis of stems and leaves. Expressed in the epidermis, stem cortex, vascular bundles and mesophyll cells in root tips, cotyledons, seedlings, leaves, caulines, flowers, siliques, pollen, and early-developing seeds.

It localises to the cell membrane. The protein resides in the secreted. Its subcellular location is the cell wall. It is found in the endoplasmic reticulum. The protein localises to the golgi apparatus. In terms of biological role, lipid transfer protein that, together with LTPG2, binds to lipids and functions as a component of the cuticular lipid export machinery that performs extensive export of intracellular lipids (e.g. C29 alkane) from epidermal cells to the surface to build the cuticular wax layer and silique walls. Involved in the establishment of resistance to the necrotrophic fungal pathogen Alternaria brassicicola. Contributes to pre-invasive defense against some non-host powdery mildew pathogens by preventing the penetration of the epidermal cell wall by the fungal agents (e.g. Blumeria graminis f. sp. hordei (Bgh)). Maybe involved in seed and ovule maturation and development, probably by regulating the fatty acids homeostasis during suberin and sporopollenin biosynthesis or deposition. In Arabidopsis thaliana (Mouse-ear cress), this protein is Non-specific lipid transfer protein GPI-anchored 1.